We begin with the raw amino-acid sequence, 410 residues long: Peptidase T (410 aa).

A Zn(2+)-binding site is contributed by histidine 79. Aspartate 81 is an active-site residue. A Zn(2+)-binding site is contributed by aspartate 142. The active-site Proton acceptor is glutamate 176. Residues glutamate 177, aspartate 199, and histidine 381 each contribute to the Zn(2+) site.

This sequence belongs to the peptidase M20B family. Requires Zn(2+) as cofactor.

The protein localises to the cytoplasm. It carries out the reaction Release of the N-terminal residue from a tripeptide.. In terms of biological role, cleaves the N-terminal amino acid of tripeptides. In Bacillus cereus (strain B4264), this protein is Peptidase T.